The following is a 692-amino-acid chain: Elongation factor G (692 aa).

A tr-type G domain is found at 8 to 282 (EKVRNIGIAA…AVVDYLPAPS (275 aa)). Residues 17-24 (AHIDAGKT), 81-85 (DTPGH), and 135-138 (NKMD) each bind GTP.

This sequence belongs to the TRAFAC class translation factor GTPase superfamily. Classic translation factor GTPase family. EF-G/EF-2 subfamily.

The protein localises to the cytoplasm. Its function is as follows. Catalyzes the GTP-dependent ribosomal translocation step during translation elongation. During this step, the ribosome changes from the pre-translocational (PRE) to the post-translocational (POST) state as the newly formed A-site-bound peptidyl-tRNA and P-site-bound deacylated tRNA move to the P and E sites, respectively. Catalyzes the coordinated movement of the two tRNA molecules, the mRNA and conformational changes in the ribosome. In Nostoc punctiforme (strain ATCC 29133 / PCC 73102), this protein is Elongation factor G.